A 112-amino-acid chain; its full sequence is Large ribosomal subunit protein uL22 (112 aa).

This sequence belongs to the universal ribosomal protein uL22 family. Part of the 50S ribosomal subunit.

This protein binds specifically to 23S rRNA; its binding is stimulated by other ribosomal proteins, e.g. L4, L17, and L20. It is important during the early stages of 50S assembly. It makes multiple contacts with different domains of the 23S rRNA in the assembled 50S subunit and ribosome. Functionally, the globular domain of the protein is located near the polypeptide exit tunnel on the outside of the subunit, while an extended beta-hairpin is found that lines the wall of the exit tunnel in the center of the 70S ribosome. The protein is Large ribosomal subunit protein uL22 of Akkermansia muciniphila (strain ATCC BAA-835 / DSM 22959 / JCM 33894 / BCRC 81048 / CCUG 64013 / CIP 107961 / Muc).